Reading from the N-terminus, the 179-residue chain is CASP-like protein 5A2 (179 aa).

The segment at 1–24 is disordered; it reads MNVSHASVHPVEDPPAAATEVENP. Residues 1 to 38 lie on the Cytoplasmic side of the membrane; it reads MNVSHASVHPVEDPPAAATEVENPPRVRMDDMEGMPGT. A helical membrane pass occupies residues 39–59; it reads LLGLALRFFQFLFAAAALCVM. The Extracellular portion of the chain corresponds to 60–70; it reads ASTSDFPSVTA. The helical transmembrane segment at 71-91 threads the bilayer; it reads FCYLVAATGLQSLWSLALAMV. The Cytoplasmic portion of the chain corresponds to 92 to 115; sequence DVYAIMVKRSLQNRRLVSLFAIGD. A helical membrane pass occupies residues 116 to 136; the sequence is GVTSTLTFAAACASAGITVLI. Over 137 to 155 the chain is Extracellular; sequence DNDLNSCAQNHCVQFETST. The chain crosses the membrane as a helical span at residues 156–176; sequence ALAFISWFAALPSFLFNFWSL. Residues 177–179 are Cytoplasmic-facing; that stretch reads ASR.

The protein belongs to the Casparian strip membrane proteins (CASP) family. In terms of assembly, homodimer and heterodimers.

The protein resides in the cell membrane. The protein is CASP-like protein 5A2 of Arabidopsis thaliana (Mouse-ear cress).